The primary structure comprises 386 residues: Prostatic acid phosphatase (386 aa).

Residues 1-32 (MRAAPLLLARAASLSLGFLFLLFFWLDRSVLA) form the signal peptide. Arg43 contributes to the substrate binding site. The active-site Nucleophile is the His44. Arg47 serves as a coordination point for substrate. Asn94 carries N-linked (GlcNAc...) asparagine glycosylation. Arg111 provides a ligand contact to substrate. Cystine bridges form between Cys161-Cys372, Cys215-Cys313, and Cys347-Cys351. An N-linked (GlcNAc...) asparagine glycan is attached at Asn220. Residue His289 coordinates substrate. Residue Asp290 is the Proton donor of the active site. Asn333 is a glycosylation site (N-linked (GlcNAc...) asparagine).

This sequence belongs to the histidine acid phosphatase family. Homodimer; dimer formation is required for phosphatase activity. Post-translationally, N-glycosylated. High mannose content, partially sialylated and fucosylated biantennary complex. Also fucosylated with partially sialylated triantennary complex oligosaccharides. In terms of processing, proteolytically cleaved in seminal fluid to produce several peptides. Peptide PAPf39, the most prominent, forms amyloid beta-sheet fibrils, SEVI (semen-derived enhancer of viral infection). In terms of tissue distribution, highly expressed in the prostate, restricted to glandular and ductal epithelial cells. Also expressed in bladder, kidney, pancreas, lung, cervix, testis and ovary. Weak expression in a subset of pancreatic islet cells, squamous epithelia, the pilosebaceous unit, colonic neuroendocrine cells and skin adnexal structures. Low expression in prostate carcinoma cells and tissues. As to expression, widely expressed. Expressed in the sarcolemma of skeletal muscle.

It localises to the secreted. It is found in the cell membrane. Its subcellular location is the lysosome membrane. The protein resides in the nucleus. The protein localises to the cytoplasm. It localises to the cytosol. The enzyme catalyses a phosphate monoester + H2O = an alcohol + phosphate. It carries out the reaction 1-(9Z-octadecenoyl)-sn-glycero-3-phosphate + H2O = 1-(9Z-octadecenoyl)-sn-glycerol + phosphate. It catalyses the reaction a ribonucleoside 5'-phosphate + H2O = a ribonucleoside + phosphate. The catalysed reaction is O-phospho-L-tyrosyl-[protein] + H2O = L-tyrosyl-[protein] + phosphate. Phosphatase activity inhibited by L(+)-tartrate, and by its derivative, alpha-benzylaminobenzylphosphonic acid. A non-specific tyrosine phosphatase that dephosphorylates a diverse number of substrates under acidic conditions (pH 4-6) including alkyl, aryl, and acyl orthophosphate monoesters and phosphorylated proteins. Has lipid phosphatase activity and inactivates lysophosphatidic acid in seminal plasma. Functionally, tyrosine phosphatase that acts as a tumor suppressor of prostate cancer through dephosphorylation of ERBB2 and deactivation of MAPK-mediated signaling. In addition to its tyrosine phosphatase activity has ecto-5'-nucleotidase activity in dorsal root ganglion (DRG) neurons. Generates adenosine from AMP which acts as a pain suppressor. In terms of biological role, (Microbial infection) Forms amyloid beta-sheet fibrils in semen. These fibrils, termed SEVI (semen-derived enhancer of viral infection) capture HIV virions, attach them to target cells and enhance infection. SEVI amyloid fibrils are degraded by polyphenol epigallocatechin-3-gallate (EGCG), a constituent of green tea. Target cell attachment and enhancement of HIV infection is inhibited by surfen. Also similarly boosts XMRV (xenotropic murine leukemia virus-related virus) infection. This chain is Prostatic acid phosphatase, found in Homo sapiens (Human).